Here is a 119-residue protein sequence, read N- to C-terminus: Ribonuclease P protein component (119 aa).

Belongs to the RnpA family. As to quaternary structure, consists of a catalytic RNA component (M1 or rnpB) and a protein subunit.

The catalysed reaction is Endonucleolytic cleavage of RNA, removing 5'-extranucleotides from tRNA precursor.. Its function is as follows. RNaseP catalyzes the removal of the 5'-leader sequence from pre-tRNA to produce the mature 5'-terminus. It can also cleave other RNA substrates such as 4.5S RNA. The protein component plays an auxiliary but essential role in vivo by binding to the 5'-leader sequence and broadening the substrate specificity of the ribozyme. The chain is Ribonuclease P protein component from Cronobacter sakazakii (strain ATCC BAA-894) (Enterobacter sakazakii).